We begin with the raw amino-acid sequence, 272 residues long: Elongation factor Ts (272 aa).

Residues 86-89 form an involved in Mg(2+) ion dislocation from EF-Tu region; it reads TDFV.

The protein belongs to the EF-Ts family.

Its subcellular location is the cytoplasm. Associates with the EF-Tu.GDP complex and induces the exchange of GDP to GTP. It remains bound to the aminoacyl-tRNA.EF-Tu.GTP complex up to the GTP hydrolysis stage on the ribosome. This chain is Elongation factor Ts, found in Blochmanniella pennsylvanica (strain BPEN).